A 379-amino-acid chain; its full sequence is UDP-4-amino-4-deoxy-L-arabinose--oxoglutarate aminotransferase (379 aa).

An N6-(pyridoxal phosphate)lysine modification is found at Lys182.

Belongs to the DegT/DnrJ/EryC1 family. ArnB subfamily. As to quaternary structure, homodimer. It depends on pyridoxal 5'-phosphate as a cofactor.

It carries out the reaction UDP-4-amino-4-deoxy-beta-L-arabinose + 2-oxoglutarate = UDP-beta-L-threo-pentopyranos-4-ulose + L-glutamate. It participates in nucleotide-sugar biosynthesis; UDP-4-deoxy-4-formamido-beta-L-arabinose biosynthesis; UDP-4-deoxy-4-formamido-beta-L-arabinose from UDP-alpha-D-glucuronate: step 2/3. It functions in the pathway bacterial outer membrane biogenesis; lipopolysaccharide biosynthesis. Functionally, catalyzes the conversion of UDP-4-keto-arabinose (UDP-Ara4O) to UDP-4-amino-4-deoxy-L-arabinose (UDP-L-Ara4N). The modified arabinose is attached to lipid A and is required for resistance to polymyxin and cationic antimicrobial peptides. The chain is UDP-4-amino-4-deoxy-L-arabinose--oxoglutarate aminotransferase from Salmonella paratyphi A (strain ATCC 9150 / SARB42).